The sequence spans 386 residues: EARP and GARP complex-interacting protein 1 (386 aa).

N-acetylmethionine is present on methionine 1. WD repeat units lie at residues 132 to 172, 182 to 222, 226 to 266, and 270 to 310; these read GAQG…SQAV, RGQL…QIYC, AHGQ…EPVK, and EHSH…SEPF. Residues 312–332 form a disordered region; it reads HLVDDDDVSDPEEHHTEKSKE. Phosphoserine is present on serine 320. Positions 322-332 are enriched in basic and acidic residues; it reads PEEHHTEKSKE. A WD 5 repeat occupies 344–384; sequence EHEDSVYAVDWASADPWLFASLSYDGRLVINRVPRALKYHI.

It belongs to the WD repeat EIPR1 family. As to quaternary structure, interacts with two multisubunit tethering complexes: EARP composed of VPS50, VPS51, VPS52 and VPS53 subunits and GARP complex composed of VPS51, VPS52, VPS53 and VPS54 subunits. Interacts with SNAP29. Ubiquitous. Highly expressed in brain, adipose tissue, spleen and kidney (at protein level).

The protein resides in the golgi apparatus. It is found in the trans-Golgi network. In terms of biological role, acts as a component of endosomal retrieval machinery that is involved in protein transport from early endosomes to either recycling endosomes or the trans-Golgi network. Mediates the recruitment of Golgi-associated retrograde protein (GARP) complex to the trans-Golgi network and controls early endosome-to-Golgi transport of internalized protein. Promotes the recycling of internalized transferrin receptor (TFRC) to the plasma membrane through interaction with endosome-associated recycling protein (EARP) complex. Controls proper insulin distribution and secretion, and retention of cargo in mature dense core vesicles. Required for the stability of the endosome-associated retrograde protein (EARP) complex subunits and for proper localization and association of EARP with membranes. The sequence is that of EARP and GARP complex-interacting protein 1 from Rattus norvegicus (Rat).